A 72-amino-acid chain; its full sequence is Translation initiation factor IF-1 (72 aa).

An S1-like domain is found at 1–72 (MTKEDNIEMQ…TKGRIIFRSR (72 aa)).

Belongs to the IF-1 family. Component of the 30S ribosomal translation pre-initiation complex which assembles on the 30S ribosome in the order IF-2 and IF-3, IF-1 and N-formylmethionyl-tRNA(fMet); mRNA recruitment can occur at any time during PIC assembly.

Its subcellular location is the cytoplasm. Functionally, one of the essential components for the initiation of protein synthesis. Stabilizes the binding of IF-2 and IF-3 on the 30S subunit to which N-formylmethionyl-tRNA(fMet) subsequently binds. Helps modulate mRNA selection, yielding the 30S pre-initiation complex (PIC). Upon addition of the 50S ribosomal subunit IF-1, IF-2 and IF-3 are released leaving the mature 70S translation initiation complex. The polypeptide is Translation initiation factor IF-1 (Buchnera aphidicola subsp. Schizaphis graminum (strain Sg)).